Here is a 403-residue protein sequence, read N- to C-terminus: Na(+)/H(+) antiporter NhaH (403 aa).

Topologically, residues M1–D6 are cytoplasmic. The chain crosses the membrane as a helical span at residues V7–L27. Topologically, residues L28 to E30 are extracellular. A helical transmembrane segment spans residues P31–I51. Topologically, residues E52–Q65 are cytoplasmic. A helical transmembrane segment spans residues A66–F86. Residues H87 to G98 lie on the Extracellular side of the membrane. A helical transmembrane segment spans residues L99 to L119. Topologically, residues D120 to A124 are cytoplasmic. The chain crosses the membrane as a helical span at residues V125–F145. Residues K146 to G167 are Extracellular-facing. A helical transmembrane segment spans residues I168–W188. Topologically, residues A189 to V195 are cytoplasmic. The chain crosses the membrane as a helical span at residues F196–F216. The Extracellular segment spans residues S217 to Q218. A helical membrane pass occupies residues V219–G239. Topologically, residues S240–Y241 are cytoplasmic. Residues F242 to F262 traverse the membrane as a helical segment. Residues G263–T281 are Extracellular-facing. The chain crosses the membrane as a helical span at residues F282–I302. At R303 to N310 the chain is on the cytoplasmic side. Residues W311–L331 traverse the membrane as a helical segment. Over G332–D372 the chain is Extracellular. Residues Q373–L393 form a helical membrane-spanning segment. Over K394–I403 the chain is Cytoplasmic.

This sequence belongs to the monovalent cation:proton antiporter 1 (CPA1) transporter (TC 2.A.36) family.

It is found in the cell membrane. Its function is as follows. Na(+)/H(+) antiporter that extrudes sodium in exchange for external protons. Can also transport lithium. In Halobacillus dabanensis, this protein is Na(+)/H(+) antiporter NhaH (nhaH).